Reading from the N-terminus, the 600-residue chain is Elongation factor 4 (600 aa).

One can recognise a tr-type G domain in the interval 4–187; the sequence is KYIRNFSIVA…AIIEQIPPPL (184 aa). GTP-binding positions include 16 to 21 and 134 to 137; these read DHGKST and NKID.

The protein belongs to the TRAFAC class translation factor GTPase superfamily. Classic translation factor GTPase family. LepA subfamily.

The protein resides in the cell membrane. It carries out the reaction GTP + H2O = GDP + phosphate + H(+). Required for accurate and efficient protein synthesis under certain stress conditions. May act as a fidelity factor of the translation reaction, by catalyzing a one-codon backward translocation of tRNAs on improperly translocated ribosomes. Back-translocation proceeds from a post-translocation (POST) complex to a pre-translocation (PRE) complex, thus giving elongation factor G a second chance to translocate the tRNAs correctly. Binds to ribosomes in a GTP-dependent manner. This chain is Elongation factor 4, found in Malacoplasma penetrans (strain HF-2) (Mycoplasma penetrans).